A 232-amino-acid chain; its full sequence is 6-phosphogluconolactonase (232 aa).

The protein belongs to the glucosamine/galactosamine-6-phosphate isomerase family. 6-phosphogluconolactonase subfamily.

It carries out the reaction 6-phospho-D-glucono-1,5-lactone + H2O = 6-phospho-D-gluconate + H(+). It participates in carbohydrate degradation; pentose phosphate pathway; D-ribulose 5-phosphate from D-glucose 6-phosphate (oxidative stage): step 2/3. Functionally, hydrolysis of 6-phosphogluconolactone to 6-phosphogluconate. The chain is 6-phosphogluconolactonase (pgl) from Aggregatibacter actinomycetemcomitans (Actinobacillus actinomycetemcomitans).